The sequence spans 665 residues: Fructose-1,6-bisphosphatase class 3 (665 aa).

This sequence belongs to the FBPase class 3 family. It depends on Mn(2+) as a cofactor.

The enzyme catalyses beta-D-fructose 1,6-bisphosphate + H2O = beta-D-fructose 6-phosphate + phosphate. Its pathway is carbohydrate biosynthesis; gluconeogenesis. The chain is Fructose-1,6-bisphosphatase class 3 from Alkaliphilus metalliredigens (strain QYMF).